The primary structure comprises 303 residues: Succinate--CoA ligase [ADP-forming] subunit alpha (303 aa).

CoA contacts are provided by residues 20-23 (TGSE), lysine 46, and 108-110 (ITE). Tyrosine 173 serves as a coordination point for substrate. Histidine 259 (tele-phosphohistidine intermediate) is an active-site residue.

The protein belongs to the succinate/malate CoA ligase alpha subunit family. Heterotetramer of two alpha and two beta subunits.

It carries out the reaction succinate + ATP + CoA = succinyl-CoA + ADP + phosphate. The enzyme catalyses GTP + succinate + CoA = succinyl-CoA + GDP + phosphate. Its pathway is carbohydrate metabolism; tricarboxylic acid cycle; succinate from succinyl-CoA (ligase route): step 1/1. Functionally, succinyl-CoA synthetase functions in the citric acid cycle (TCA), coupling the hydrolysis of succinyl-CoA to the synthesis of either ATP or GTP and thus represents the only step of substrate-level phosphorylation in the TCA. The alpha subunit of the enzyme binds the substrates coenzyme A and phosphate, while succinate binding and nucleotide specificity is provided by the beta subunit. The protein is Succinate--CoA ligase [ADP-forming] subunit alpha of Mycobacterium bovis (strain ATCC BAA-935 / AF2122/97).